The primary structure comprises 468 residues: MKINSPLEAYKYLPQTNCGECGEATCMAFASKLIDRSGKTSDCPPLIKEKKFAKKLAELDRLLAPEIRQVTIGVGEKAVNIGGDDVLYRHKLTFFNKTKMFFDVADNMDEAALVERVNSIANFRKFYVGRNLLLDGVAIRAVSNDPAKFAAAVKKVAEAGLPMIFCSFNPAVLKAGLEAAKDLKPLLYAANKDNWKEVGELAIEYKVPVVVSAFNDLDALKTLAKTYAEAGIKDIVLDPGTYPTGKGLKDTFTNFLKIRRAGIMGDTEIAYPIMALPFTAWMAGIADPVSASYWETVMASVFTIRYGDIMILHSLEPYATLPEVHLAETIYTDPRTPVSVDGGMYKVGSPTADSPVLFTTNFALTYYTVESDISSNGIDCWLLAVDTDGIGVEAAVAGGQLTADKVKDAFDKAGFDLKTAVNHNTVVTPGLAARLQGDLEDKLGANVKVGPMDSGRIPGWMEKNWPPK.

One can recognise a 4Fe-4S domain in the interval 1–60 (MKINSPLEAYKYLPQTNCGECGEATCMAFASKLIDRSGKTSDCPPLIKEKKFAKKLAELD). [4Fe-4S] cluster contacts are provided by Cys-18, Cys-21, Cys-26, and Cys-43.

As to quaternary structure, heterodimer of delta and gamma chains. The ACDS complex is made up of alpha, epsilon, beta, gamma and delta chains with a probable stoichiometry of (alpha(2)epsilon(2))(4)-beta(8)-(gamma(1)delta(1))(8). Corrinoid is required as a cofactor. It depends on [4Fe-4S] cluster as a cofactor.

The enzyme catalyses 5,6,7,8-tetrahydrosarcinapterin + methyl-Co(III)-[corrinoid Fe-S protein] = 5-methyltetrahydrosarcinapterin + Co(I)-[corrinoid Fe-S protein] + H(+). Its pathway is one-carbon metabolism; methanogenesis from acetate. Functionally, part of a complex that catalyzes the reversible cleavage of acetyl-CoA, allowing growth on acetate as sole source of carbon and energy. This Methanosarcina acetivorans (strain ATCC 35395 / DSM 2834 / JCM 12185 / C2A) protein is Acetyl-CoA decarbonylase/synthase complex subunit gamma.